We begin with the raw amino-acid sequence, 218 residues long: Adenylate kinase (218 aa).

10–15 serves as a coordination point for ATP; that stretch reads GAGKGT. Positions 30 to 59 are NMP; that stretch reads STGDMLRAAVKAGTPLGLQAKAVMDAGQLV. Residues Thr-31, Arg-36, 57-59, 85-88, and Gln-92 each bind AMP; these read QLV and GFPR. Positions 122–159 are LID; the sequence is GRRSHPASGRTYHVKFNPPKVEGKDDVTGEPLVQREDD. Residues Arg-123 and 132–133 contribute to the ATP site; that span reads TY. The disordered stretch occupies residues 127–150; sequence PASGRTYHVKFNPPKVEGKDDVTG. Residues Arg-156 and Arg-167 each coordinate AMP. Gly-203 contacts ATP.

The protein belongs to the adenylate kinase family. As to quaternary structure, monomer.

It is found in the cytoplasm. The catalysed reaction is AMP + ATP = 2 ADP. Its pathway is purine metabolism; AMP biosynthesis via salvage pathway; AMP from ADP: step 1/1. Functionally, catalyzes the reversible transfer of the terminal phosphate group between ATP and AMP. Plays an important role in cellular energy homeostasis and in adenine nucleotide metabolism. This chain is Adenylate kinase, found in Acidovorax ebreus (strain TPSY) (Diaphorobacter sp. (strain TPSY)).